The following is a 367-amino-acid chain: Uroporphyrinogen decarboxylase (367 aa).

Residue Met-1 is modified to N-acetylmethionine. Positions 37, 39, 41, 50, 86, 164, 219, and 339 each coordinate coproporphyrinogen I. Residues Arg-37, Ala-39, and Arg-41 each contribute to the coproporphyrinogen III site. Asp-86, Tyr-164, Ser-219, and His-339 together coordinate coproporphyrinogen III.

It belongs to the uroporphyrinogen decarboxylase family. In terms of assembly, homodimer.

The protein localises to the cytoplasm. Its subcellular location is the cytosol. The enzyme catalyses uroporphyrinogen III + 4 H(+) = coproporphyrinogen III + 4 CO2. It catalyses the reaction uroporphyrinogen I + 4 H(+) = coproporphyrinogen I + 4 CO2. It functions in the pathway porphyrin-containing compound metabolism; protoporphyrin-IX biosynthesis; coproporphyrinogen-III from 5-aminolevulinate: step 4/4. Catalyzes the sequential decarboxylation of the four acetate side chains of uroporphyrinogen to form coproporphyrinogen and participates in the fifth step in the heme biosynthetic pathway. Isomer I or isomer III of uroporphyrinogen may serve as substrate, but only coproporphyrinogen III can ultimately be converted to heme. In vitro also decarboxylates pentacarboxylate porphyrinogen I. This Ovis aries (Sheep) protein is Uroporphyrinogen decarboxylase.